Reading from the N-terminus, the 792-residue chain is Molybdenum cofactor sulfurase (792 aa).

Position 246 is an N6-(pyridoxal phosphate)lysine (K246). Residue C414 is part of the active site. An MOSC domain is found at 646–792; it reads LRLLRQSSQR…LTCGDVVVVT (147 aa). S748 carries the post-translational modification Phosphoserine.

This sequence belongs to the class-V pyridoxal-phosphate-dependent aminotransferase family. MOCOS subfamily. The cofactor is pyridoxal 5'-phosphate.

It carries out the reaction Mo-molybdopterin + L-cysteine + AH2 = thio-Mo-molybdopterin + L-alanine + A + H2O. Its pathway is cofactor biosynthesis; molybdopterin biosynthesis. Sulfurates the molybdenum cofactor. Sulfation of molybdenum is essential for xanthine dehydrogenase (XDH) and aldehyde oxidase (ADO) enzymes in which molybdenum cofactor is liganded by 1 oxygen and 1 sulfur atom in active form. This chain is Molybdenum cofactor sulfurase, found in Drosophila pseudoobscura pseudoobscura (Fruit fly).